The chain runs to 292 residues: MSEIRLYVTTTEAKAEEILDLLSALFGEEDFAIGTTEIDEKKDIWEASIYMMAEDEAEVQSRVEDALKASFPDARLEREVIPEIDWVVKSLEGLKPVRAGRFLVHGSHDRDKIRPGDIAIEIDAGQAFGTGHHGTTAGCLEVIDSVVRSRPVRNALDLGTGSGVLAIAVRKLRNIPVLATDIDPIATKVAAENVRRNGIASGIVTRTAPGFHSTAFSEHGPFDLIIANILARPLIRMAPKLATHLAPGGSVILSGILAGQRWKVIAAYSGARLRHVKTIWRNGWVTIHLDRP.

S-adenosyl-L-methionine is bound by residues Thr-136, Gly-159, Asp-181, and Asn-228.

Belongs to the methyltransferase superfamily. PrmA family.

The protein localises to the cytoplasm. The catalysed reaction is L-lysyl-[protein] + 3 S-adenosyl-L-methionine = N(6),N(6),N(6)-trimethyl-L-lysyl-[protein] + 3 S-adenosyl-L-homocysteine + 3 H(+). Functionally, methylates ribosomal protein L11. The polypeptide is Ribosomal protein L11 methyltransferase (Rhizobium johnstonii (strain DSM 114642 / LMG 32736 / 3841) (Rhizobium leguminosarum bv. viciae)).